The following is a 99-amino-acid chain: Large ribosomal subunit protein uL23 (99 aa).

This sequence belongs to the universal ribosomal protein uL23 family. As to quaternary structure, part of the 50S ribosomal subunit. Contacts protein L29, and trigger factor when it is bound to the ribosome.

Its function is as follows. One of the early assembly proteins it binds 23S rRNA. One of the proteins that surrounds the polypeptide exit tunnel on the outside of the ribosome. Forms the main docking site for trigger factor binding to the ribosome. The chain is Large ribosomal subunit protein uL23 from Pseudomonas savastanoi pv. phaseolicola (strain 1448A / Race 6) (Pseudomonas syringae pv. phaseolicola (strain 1448A / Race 6)).